The sequence spans 168 residues: MGVSMALEVLVYLAVLVWTCAWDIDVDVSCSQDWMTVSVSAFSQNKRNPYIFADELYLGQNCRVTQIHAHQYDFIYPVSHCGIRTKVISNEIVCFETEMYFRPRNYCLELQIVPLQCSASRKSVWLMPLSTEEDPKPVKSPFMTDFEATPEELGLLNAHQAASSQNKR.

The signal sequence occupies residues 1-21 (MGVSMALEVLVYLAVLVWTCA).

The protein belongs to the PLAC1 family. As to expression, expressed in ovaries. Highly expressed in the germinal vesicles oocytes and metaphase II oocytes.

The protein resides in the secreted. It localises to the cytoplasm. This Mus musculus (Mouse) protein is Oocyte-secreted protein 2 (Oosp2).